Here is a 54-residue protein sequence, read N- to C-terminus: Protein YojO (54 aa).

This sequence belongs to the YojO family.

This chain is Protein YojO (yojO), found in Escherichia coli (strain K12).